A 440-amino-acid chain; its full sequence is Ribulose bisphosphate carboxylase large chain (440 aa).

Position 4 is an N6,N6,N6-trimethyllysine (K4). Substrate-binding residues include N113 and T163. K165 acts as the Proton acceptor in catalysis. Residue K167 participates in substrate binding. 3 residues coordinate Mg(2+): K191, D193, and E194. K191 is modified (N6-carboxylysine). The active-site Proton acceptor is H284. R285, H317, and S369 together coordinate substrate.

Belongs to the RuBisCO large chain family. Type I subfamily. In terms of assembly, heterohexadecamer of 8 large chains and 8 small chains; disulfide-linked. The disulfide link is formed within the large subunit homodimers. Mg(2+) serves as cofactor. In terms of processing, the disulfide bond which can form in the large chain dimeric partners within the hexadecamer appears to be associated with oxidative stress and protein turnover.

The protein resides in the plastid. It is found in the chloroplast. The catalysed reaction is 2 (2R)-3-phosphoglycerate + 2 H(+) = D-ribulose 1,5-bisphosphate + CO2 + H2O. It catalyses the reaction D-ribulose 1,5-bisphosphate + O2 = 2-phosphoglycolate + (2R)-3-phosphoglycerate + 2 H(+). RuBisCO catalyzes two reactions: the carboxylation of D-ribulose 1,5-bisphosphate, the primary event in carbon dioxide fixation, as well as the oxidative fragmentation of the pentose substrate in the photorespiration process. Both reactions occur simultaneously and in competition at the same active site. This is Ribulose bisphosphate carboxylase large chain from Onoclea sensibilis (Sensitive fern).